The sequence spans 131 residues: Global transcriptional regulator Spx 1 (131 aa).

Residues Cys-10 and Cys-13 are joined by a disulfide bond.

It belongs to the ArsC family. Spx subfamily. In terms of assembly, interacts with the C-terminal domain of the alpha subunit of the RNAP.

It localises to the cytoplasm. In terms of biological role, global transcriptional regulator that plays a key role in stress response and exerts either positive or negative regulation of genes. Acts by interacting with the C-terminal domain of the alpha subunit of the RNA polymerase (RNAP). This interaction can enhance binding of RNAP to the promoter region of target genes and stimulate their transcription, or block interaction of RNAP with activator. The polypeptide is Global transcriptional regulator Spx 1 (Bacillus anthracis).